The following is a 1027-amino-acid chain: Xyloglucanase (1027 aa).

An N-terminal signal peptide occupies residues 1–32 (MKTFLGKKLWMASLAVALAAGSFAALPEMTSA). Asp70 acts as the Nucleophile in catalysis. BNR repeat units lie at residues 134 to 143 (RSTDRGDTWQ), 185 to 196 (WRSSDYGATWSK), 252 to 262 (YRSTDGGATWT), and 357 to 367 (FRSKDGGTTWT). Asp479 functions as the Proton donor in the catalytic mechanism. BNR repeat units lie at residues 537 to 545 (SSDGGTNWY) and 717 to 727 (FRSDDGGASWV). The 152-residue stretch at 876–1027 (PEGSIRIEMY…SGTLQWGIEP (152 aa)) folds into the CBM3 domain.

Belongs to the glycosyl hydrolase 74 family.

Hydrolyzes the glucosidic bonds of unbranched Glc residues in tamarind seed xyloglucan, producing XXXG, XLXG, XXLG and XLLG. May have a dual endo- and exo- mode of action towards xyloglucan, or may have an endo-processive mode of action. The sequence is that of Xyloglucanase from Paenibacillus sp.